A 378-amino-acid chain; its full sequence is Queuine tRNA-ribosyltransferase (378 aa).

Catalysis depends on D89, which acts as the Proton acceptor. Substrate-binding positions include 89 to 93, D143, Q187, and G214; that span reads DSGGF. Residues 245 to 251 form an RNA binding region; that stretch reads GVGKPQD. Catalysis depends on D264, which acts as the Nucleophile. The segment at 269-273 is RNA binding; important for wobble base 34 recognition; the sequence is TRNAR. Zn(2+)-binding residues include C302, C304, C307, and H334.

Belongs to the queuine tRNA-ribosyltransferase family. As to quaternary structure, homodimer. Within each dimer, one monomer is responsible for RNA recognition and catalysis, while the other monomer binds to the replacement base PreQ1. Requires Zn(2+) as cofactor.

The catalysed reaction is 7-aminomethyl-7-carbaguanine + guanosine(34) in tRNA = 7-aminomethyl-7-carbaguanosine(34) in tRNA + guanine. The protein operates within tRNA modification; tRNA-queuosine biosynthesis. Its function is as follows. Catalyzes the base-exchange of a guanine (G) residue with the queuine precursor 7-aminomethyl-7-deazaguanine (PreQ1) at position 34 (anticodon wobble position) in tRNAs with GU(N) anticodons (tRNA-Asp, -Asn, -His and -Tyr). Catalysis occurs through a double-displacement mechanism. The nucleophile active site attacks the C1' of nucleotide 34 to detach the guanine base from the RNA, forming a covalent enzyme-RNA intermediate. The proton acceptor active site deprotonates the incoming PreQ1, allowing a nucleophilic attack on the C1' of the ribose to form the product. After dissociation, two additional enzymatic reactions on the tRNA convert PreQ1 to queuine (Q), resulting in the hypermodified nucleoside queuosine (7-(((4,5-cis-dihydroxy-2-cyclopenten-1-yl)amino)methyl)-7-deazaguanosine). This is Queuine tRNA-ribosyltransferase from Blochmanniella floridana.